The primary structure comprises 165 residues: 3-isopropylmalate dehydratase small subunit (165 aa).

This sequence belongs to the LeuD family. LeuD type 2 subfamily. As to quaternary structure, heterodimer of LeuC and LeuD.

It carries out the reaction (2R,3S)-3-isopropylmalate = (2S)-2-isopropylmalate. It functions in the pathway amino-acid biosynthesis; L-leucine biosynthesis; L-leucine from 3-methyl-2-oxobutanoate: step 2/4. Catalyzes the isomerization between 2-isopropylmalate and 3-isopropylmalate, via the formation of 2-isopropylmaleate. In Hydrogenobaculum sp. (strain Y04AAS1), this protein is 3-isopropylmalate dehydratase small subunit.